The chain runs to 282 residues: Ermin (282 aa).

Composition is skewed to polar residues over residues 1–12 (MTDTPVTLSGSE) and 21–30 (NGQQPSSQTR). The interval 1–71 (MTDTPVTLSG…NSKGNVLPRG (71 aa)) is disordered. 5 positions are modified to phosphoserine: serine 72, serine 212, serine 224, serine 228, and serine 231. Positions 212 to 224 (SPLKEESLAREDS) are enriched in basic and acidic residues. The interval 212 to 246 (SPLKEESLAREDSPLSSPSSQPGTPDEQLVLGKKG) is disordered. Residues 225–234 (PLSSPSSQPG) show a composition bias toward polar residues. Threonine 235 is modified (phosphothreonine). Residues 263–282 (KIRKGNTKQRIDEFESMMHL) form a binds actin region.

As to quaternary structure, binds actin. Expressed specifically by the oligodendrocytes. Highest expression seen in the spinal cord followed by brainstem, cerebellum, thalamus, and hypothalamus. In the myelin sheath, found mainly in the abaxon and the lateral few terminal loops. Its apposition to the myelinated axon, through the latter, defines an axonal subregion, termed juxtanode, at the Ranvier node-paranode junction.

The protein localises to the cytoplasm. Its subcellular location is the cytoskeleton. Its function is as follows. Plays a role in cytoskeletal rearrangements during the late wrapping and/or compaction phases of myelinogenesis as well as in maintenance and stability of myelin sheath in the adult. May play an important role in late-stage oligodendroglia maturation, myelin/Ranvier node formation during CNS development, and in the maintenance and plasticity of related structures in the mature CNS. This Rattus norvegicus (Rat) protein is Ermin (Ermn).